Consider the following 306-residue polypeptide: Glutaminase (306 aa).

Positions 64, 115, 159, 166, 190, 242, and 260 each coordinate substrate.

This sequence belongs to the glutaminase family. As to quaternary structure, homotetramer.

It carries out the reaction L-glutamine + H2O = L-glutamate + NH4(+). In Aliivibrio fischeri (strain ATCC 700601 / ES114) (Vibrio fischeri), this protein is Glutaminase.